The following is a 1388-amino-acid chain: DNA-directed RNA polymerase subunit beta (1388 aa).

It belongs to the RNA polymerase beta chain family. In terms of assembly, the RNAP catalytic core consists of 2 alpha, 1 beta, 1 beta' and 1 omega subunit. When a sigma factor is associated with the core the holoenzyme is formed, which can initiate transcription.

It catalyses the reaction RNA(n) + a ribonucleoside 5'-triphosphate = RNA(n+1) + diphosphate. Functionally, DNA-dependent RNA polymerase catalyzes the transcription of DNA into RNA using the four ribonucleoside triphosphates as substrates. In Xylella fastidiosa (strain Temecula1 / ATCC 700964), this protein is DNA-directed RNA polymerase subunit beta.